The following is a 758-amino-acid chain: 5-methyltetrahydropteroyltriglutamate--homocysteine methyltransferase (758 aa).

5-methyltetrahydropteroyltri-L-glutamate contacts are provided by residues 16–19 (RELK) and Lys-116. L-homocysteine is bound by residues 436 to 438 (IGS) and Glu-489. L-methionine-binding positions include 436 to 438 (IGS) and Glu-489. 5-methyltetrahydropteroyltri-L-glutamate-binding positions include 520 to 521 (RC) and Trp-566. Asp-604 lines the L-homocysteine pocket. Residue Asp-604 coordinates L-methionine. Glu-610 lines the 5-methyltetrahydropteroyltri-L-glutamate pocket. Zn(2+)-binding residues include His-646, Cys-648, and Glu-670. His-699 serves as the catalytic Proton donor. Residue Cys-731 participates in Zn(2+) binding.

Belongs to the vitamin-B12 independent methionine synthase family. Requires Zn(2+) as cofactor.

The enzyme catalyses 5-methyltetrahydropteroyltri-L-glutamate + L-homocysteine = tetrahydropteroyltri-L-glutamate + L-methionine. It functions in the pathway amino-acid biosynthesis; L-methionine biosynthesis via de novo pathway; L-methionine from L-homocysteine (MetE route): step 1/1. Functionally, catalyzes the transfer of a methyl group from 5-methyltetrahydrofolate to homocysteine resulting in methionine formation. The protein is 5-methyltetrahydropteroyltriglutamate--homocysteine methyltransferase of Xylella fastidiosa (strain 9a5c).